The primary structure comprises 478 residues: Putative malate transporter YflS (478 aa).

A run of 12 helical transmembrane segments spans residues 12-31 (AVKL…IWFI), 41-57 (AWHL…GFIS), 64-81 (AIAI…TLSI), 96-118 (IVIA…ISYV), 187-209 (GFQG…PLIA), 222-244 (WTSW…PLVI), 277-296 (LSMV…GGSF), 300-319 (ATTT…VLTW), 332-354 (LTWF…VSWF), 364-386 (GFSW…YFFA), 398-420 (AFLA…LAFI), and 450-472 (WSIG…GLWW).

This sequence belongs to the SLC13A/DASS transporter (TC 2.A.47) family. DIT1 subfamily.

The protein resides in the cell membrane. Its function is as follows. Might be a malate transporter. The sequence is that of Putative malate transporter YflS (yflS) from Bacillus subtilis (strain 168).